We begin with the raw amino-acid sequence, 412 residues long: Glucose-1-phosphate adenylyltransferase (412 aa).

Alpha-D-glucose 1-phosphate contacts are provided by residues Gly-163, 179–180 (EK), and Ser-197.

The protein belongs to the bacterial/plant glucose-1-phosphate adenylyltransferase family. As to quaternary structure, homotetramer.

The catalysed reaction is alpha-D-glucose 1-phosphate + ATP + H(+) = ADP-alpha-D-glucose + diphosphate. It participates in glycan biosynthesis; glycogen biosynthesis. Functionally, involved in the biosynthesis of ADP-glucose, a building block required for the elongation reactions to produce glycogen. Catalyzes the reaction between ATP and alpha-D-glucose 1-phosphate (G1P) to produce pyrophosphate and ADP-Glc. The sequence is that of Glucose-1-phosphate adenylyltransferase from Frankia casuarinae (strain DSM 45818 / CECT 9043 / HFP020203 / CcI3).